A 780-amino-acid chain; its full sequence is MADDEEEIIQKVEVKPDEFNGLIGSIAGNLIRDKVGGAGGDILGGLASNFFGGGGGGGGGGGGGGFGGGNGGFGGGSNYDQGGNGNSGDQQKRKRDMAKDLIGGIFDNVVNRKGKKEQDNYGGGGNYGGGGGNQGGGGGGGFNFNDIGGLINSMGGGGGGGQRQGGGGGGFGDILGGIGSLIGGGGGGQYNGGGGNVNPNNLNGGMVNVIGNLIGEAAHRFLGVDPGTGRIIGAVAGNVIMGLGGKDNSLGNIGKVILDNIISGKFRRDVDPFVRPGPDPDRGGGGSGPSPISPRPTTEPQDFYELRDQCLESKRLFEDPQFLANDSSLFFSKRPPKRVEWLRPGEITREPQLITEGHSRFDVIQGELGDCWLLAAAANLTLKDELFYRVVPPDQSFTENYAGIFHFQFWQYGKWVDVVIDDRLPTSNGELLYMHSASNNEFWSALLEKAYAKLFGSYEALKGGTTSEALEDMTGGLTEFIDLKNPPRNLMQMMMRGFEMGSLFGCSIEADPNVWEAKMSNGLVKGHAYSITGCRIVDGPNGQTCILRIRNPWGNEQEWNGPWSDNSREWRSVPDSVKQDMGLKFDHDGEFWMSFDDFMRNFEKMEICNLGPDVMDEVYQMTGVKAAGMVWAANTHDGAWVRNQTAGGCRNYINTFANNPQFRVQLTDSDPDDDDELCTVIFAVLQKYRRNLKQDGLDNVPIGFAVYDAGNNRGRLSKQFFAANKSAMRSAAFINLREMTGRFRVPPGNYVVVPSTFEPNEEAEFMLRVYTNGFIESEEL.

The segment covering 269 to 282 (DVDPFVRPGPDPDR) has biased composition (basic and acidic residues). The segment at 269-300 (DVDPFVRPGPDPDRGGGGSGPSPISPRPTTEP) is disordered. A Calpain catalytic domain is found at 316 to 611 (LFEDPQFLAN…FEKMEICNLG (296 aa)). Catalysis depends on residues cysteine 371, histidine 527, and asparagine 551.

This sequence belongs to the peptidase C2 family. In terms of tissue distribution, expressed in muscle and neuronal tissues. Expressed in the ventral and dorsal nerve cord, intestinal and hypodermal tissues.

It localises to the cytoplasm. Its subcellular location is the myofibril. The protein localises to the sarcomere. It is found in the m line. Calcium-regulated non-lysosomal thiol-protease which catalyzes limited proteolysis of substrates. Required for assembly and maintenance of integrin attachment complexes which are essential for maintenance of adult muscle. Proteolytic activity is activated in response to increased intracellular Ca(2+) levels during cell degeneration and promotes necrotic cell death. The polypeptide is Calpain clp-1 (Caenorhabditis elegans).